The sequence spans 2373 residues: Highly reducing polyketide synthase (2373 aa).

The 428-residue stretch at 19 to 446 folds into the Ketosynthase family 3 (KS3) domain; that stretch reads QEPIAVVGIA…GSNAHVIVEE (428 aa). Residues C192, H329, and H369 each act as for beta-ketoacyl synthase activity in the active site. Residues 560 to 874 form a malonyl-CoA:ACP transacylase (MAT) domain region; that stretch reads IFTGQGAQWP…QYTSAMARGA (315 aa). S652 serves as the catalytic For malonyltransferase activity. The tract at residues 942-1078 is N-terminal hotdog fold; it reads HDLLGSKVLG…GLIRIDEDVP (137 aa). The interval 942–1241 is dehydratase (DH) domain; that stretch reads HDLLGSKVLG…LSGLRYTRID (300 aa). One can recognise a PKS/mFAS DH domain in the interval 942-1246; the sequence is HDLLGSKVLG…YTRIDTGPSV (305 aa). H974 acts as the Proton acceptor; for dehydratase activity in catalysis. Residues 1090–1246 form a C-terminal hotdog fold region; sequence SHQVDASLWH…YTRIDTGPSV (157 aa). Catalysis depends on D1154, which acts as the Proton donor; for dehydratase activity. The segment at 1669 to 1985 is enoyl reductase (ER) domain; the sequence is GTTDSLIYSE…SANHIGKIVI (317 aa). A ketoreductase (KR) domain region spans residues 2010–2187; the sequence is GYLLIGGLKG…NSVDLGAIQD (178 aa). Residues 2294–2370 enclose the Carrier domain; that stretch reads AIHDAVIDVT…QLAQKIVARL (77 aa). At S2330 the chain carries O-(pantetheine 4'-phosphoryl)serine.

Pantetheine 4'-phosphate is required as a cofactor.

It participates in mycotoxin biosynthesis. Functionally, highly reducing polyketide synthase; part of the gene cluster that mediates the biosynthesis of brefeldin A (BFA), a protein transport inhibitor that shows antiviral, antifungal, and antitumor properties. The proposed biosynthesis of BFA involves formation of an acyclic polyketide chain that is differentially tailored throughout the backbone. The highly reducing polyketide synthase Bref-PKS is proposed to synthesize the precisely reduced octaketide precursor, which could then be directly offloaded by the thiohydrolase enzyme Bref-TH followed by a cytochrome P450 monooxygenase-mediated formation of the cyclopentane ring and macrocyclization to afford 7-deoxy BFA. Alternatively, the first ring annulation can also occur on the ACP-tethered intermediate before the thiohydrolase release and lactonization. The C7-hydroxylation by another cytochrome P450 monooxygenase is believed to be the final step in the process to obtain the final structure of BFA. In addition to the HRPKS Bref-PKS and the thiohydrolase Bref-TH, the brefeldin A biosynthesis cluster contains 4 cytochrome p450 monooxygenases (called orf3 to orf6), as well a the probable cluster-specific transcription regulator orf8. This chain is Highly reducing polyketide synthase, found in Eupenicillium brefeldianum (Penicillium brefeldianum).